Here is a 210-residue protein sequence, read N- to C-terminus: Somatotropin (210 aa).

The N-terminal stretch at 1–23 (MARALVLLSVVLVSLLVNQGTAS) is a signal peptide. H38 contacts Zn(2+). A disulfide bridge connects residues C71 and C183. Residue E192 participates in Zn(2+) binding. Cysteines 200 and 208 form a disulfide.

The protein belongs to the somatotropin/prolactin family.

It localises to the secreted. Growth hormone plays an important role in growth control. The polypeptide is Somatotropin (gh) (Ctenopharyngodon idella (Grass carp)).